The chain runs to 801 residues: Triacylglycerol lipase SDP1L (801 aa).

Residue N130 is glycosylated (N-linked (GlcNAc...) asparagine). 2 consecutive transmembrane segments (helical) span residues 232–249 and 261–277; these read ALLLSGGASLGAFHLGVV and IIAGSSVGSVMCAVVGT. The PNPLA domain occupies 233–436; that stretch reads LLLSGGASLG…EMDLPMIQLK (204 aa). The short motif at 264–268 is the GXSXG element; that stretch reads GSSVG. Residue S266 is the Nucleophile of the active site. Residues N328 and N332 are each glycosylated (N-linked (GlcNAc...) asparagine). D423 serves as the catalytic Proton acceptor. N-linked (GlcNAc...) asparagine glycosylation is found at N605, N620, N649, N653, N708, and N759. Residues 648–675 are disordered; the sequence is SNRTSNLSHTYDAGSECDSPEAEDWTRS. Residues 750–801 are disordered; it reads MNSEPEDSQNESEIPETPESVQLDSPEKDIIDGESSASEDGDAQANLIHDHE. Acidic residues predominate over residues 753 to 765; the sequence is EPEDSQNESEIPE.

Highly expressed in mature pollen.

It localises to the lipid droplet. The protein resides in the membrane. It catalyses the reaction a triacylglycerol + H2O = a diacylglycerol + a fatty acid + H(+). In terms of biological role, may be involved in the release of fatty acids from the oil body in germinating seedlings. Can hydrolyze triacylglycerols in vitro. The sequence is that of Triacylglycerol lipase SDP1L from Arabidopsis thaliana (Mouse-ear cress).